The chain runs to 146 residues: Phospholipase A2 OS2 (146 aa).

Residues 1–27 form the signal peptide; sequence MHPAHLLVLLAVCVSLLGASDIPPLPL. Intrachain disulfides connect Cys-38–Cys-99, Cys-54–Cys-145, Cys-56–Cys-72, Cys-71–Cys-126, Cys-78–Cys-119, Cys-88–Cys-112, and Cys-106–Cys-117. Positions 55, 57, and 59 each coordinate Ca(2+). His-75 is a catalytic residue. Asp-76 provides a ligand contact to Ca(2+). The active site involves Asp-120.

This sequence belongs to the phospholipase A2 family. Group I subfamily. D49 sub-subfamily. In terms of assembly, monomer. Ca(2+) serves as cofactor. Expressed by the venom gland.

It is found in the secreted. It catalyses the reaction a 1,2-diacyl-sn-glycero-3-phosphocholine + H2O = a 1-acyl-sn-glycero-3-phosphocholine + a fatty acid + H(+). Functionally, snake venom phospholipase A2 (PLA2) that shows high presynaptic neurotoxicity in vertebrata that is independent of catalytic activity, as well as local myotoxicity when intramuscularly injected into mice. Blocks acetylcholine release in Aplysia neurons, and potentiates pro-inflammatory cellular signaling. Potentiates glutamate excitoxicity when coinjected into brain of rats. May act by binding in a calcium-dependent fashion and with high affinity to a neuronal-type (N-type) PLA2 receptor, and with very high affinity to a muscle-type (M-type) PLA2 receptor. In vitro, shows a high-specific activity on E.coli membranes and is more efficient on the anionic phospholipid POPG than on the anionic phospholipid POPS or the zwitterionic phospholipid POPC. Exerts catalytically-independent anti-HIV (IC(50) is 35 nM) activity and catalytically-dependent antimalarial activity (IC(50) is 3.1 nM when tested on P.falciparum grown in serum that contains lipoproteins). PLA2 catalyzes the calcium-dependent hydrolysis of the 2-acyl groups in 3-sn-phosphoglycerides. This chain is Phospholipase A2 OS2, found in Oxyuranus scutellatus scutellatus (Australian taipan).